Here is a 445-residue protein sequence, read N- to C-terminus: Retrovirus-related Pol polyprotein from type-1 retrotransposable element R2 (445 aa).

A Reverse transcriptase domain is found at 1–114 (QPSVFNLVKW…LSRDDSLAKA (114 aa)). The nucleic acid-binding endonuclease stretch occupies residues 115–445 (MLASAGPAAE…GATPRQLIEY (331 aa)). Basic residues predominate over residues 380-389 (GPRPAHHHQP). The segment at 380–445 (GPRPAHHHQP…GATPRQLIEY (66 aa)) is disordered. Positions 396–405 (ATANTGTLQS) are enriched in polar residues.

The enzyme catalyses DNA(n) + a 2'-deoxyribonucleoside 5'-triphosphate = DNA(n+1) + diphosphate. The protein is Retrovirus-related Pol polyprotein from type-1 retrotransposable element R2 of Popillia japonica (Japanese beetle).